We begin with the raw amino-acid sequence, 392 residues long: Phosphoglycerate kinase (392 aa).

Residues 21 to 23, arginine 36, 59 to 62, arginine 113, and arginine 146 each bind substrate; these read DFN and HLGR. Residues lysine 197, glutamate 319, and 345–348 contribute to the ATP site; that span reads GGDT.

It belongs to the phosphoglycerate kinase family. As to quaternary structure, monomer.

The protein localises to the cytoplasm. It carries out the reaction (2R)-3-phosphoglycerate + ATP = (2R)-3-phospho-glyceroyl phosphate + ADP. Its pathway is carbohydrate degradation; glycolysis; pyruvate from D-glyceraldehyde 3-phosphate: step 2/5. This chain is Phosphoglycerate kinase, found in Francisella tularensis subsp. novicida (strain U112).